A 31-amino-acid polypeptide reads, in one-letter code: Cytochrome b6-f complex subunit 6 (31 aa).

Residues 4–26 (ITSYFGFLLAASTITPALLIGLS) form a helical membrane-spanning segment.

This sequence belongs to the PetL family. The 4 large subunits of the cytochrome b6-f complex are cytochrome b6, subunit IV (17 kDa polypeptide, PetD), cytochrome f and the Rieske protein, while the 4 small subunits are PetG, PetL, PetM and PetN. The complex functions as a dimer.

The protein resides in the plastid. Its subcellular location is the chloroplast thylakoid membrane. Functionally, component of the cytochrome b6-f complex, which mediates electron transfer between photosystem II (PSII) and photosystem I (PSI), cyclic electron flow around PSI, and state transitions. PetL is important for photoautotrophic growth as well as for electron transfer efficiency and stability of the cytochrome b6-f complex. The chain is Cytochrome b6-f complex subunit 6 from Liriodendron tulipifera (Tuliptree).